Here is a 215-residue protein sequence, read N- to C-terminus: Vacuolar ATPase assembly integral membrane protein VPH2 (215 aa).

Over 1–134 (MFEIKLNDRI…SQINKQIKEQ (134 aa)) the chain is Cytoplasmic. A helical transmembrane segment spans residues 135 to 155 (VTTVFNVLVSVISVVVAIWYW). At 156-167 (TGSSTNFPVHVR) the chain is on the lumenal side. A helical membrane pass occupies residues 168–186 (LLLCLFFGILVLVADVVVY). Topologically, residues 187 to 215 (NSYLKKLEEAKVKEKTKVEKKKVLSKITL) are cytoplasmic.

The protein localises to the endoplasmic reticulum membrane. In terms of biological role, required for vacuolar ATPase assembly. The polypeptide is Vacuolar ATPase assembly integral membrane protein VPH2 (VPH2) (Saccharomyces cerevisiae (strain ATCC 204508 / S288c) (Baker's yeast)).